We begin with the raw amino-acid sequence, 319 residues long: UPF0761 membrane protein PBPRA3489 (319 aa).

The next 6 membrane-spanning stretches (helical) occupy residues Leu50 to Leu70, Val107 to Leu127, Phe143 to Val163, Ala188 to Leu208, Ala215 to Leu235, and Ala249 to Leu269.

Belongs to the UPF0761 family.

Its subcellular location is the cell inner membrane. This chain is UPF0761 membrane protein PBPRA3489, found in Photobacterium profundum (strain SS9).